Reading from the N-terminus, the 518-residue chain is MKYKDLRDFIQRLEALGELRRVTQPVSPVLEMTELCDRVLRAGGPALLFNAPTGYDFPVLGNLFGTPRRVALGMGVDAGDDAALDSLRDLGRLLSALKEPDPPKSLKDAGKLLSLAKAVWDMAPKSVSSPPCQEIVWEGADVDLNRLPIQTCWPGDAGPLVTWGLTVTRGPNKSRQNLGIYRQQLIGRNKLIMRWLAHRGGALDFREFALQNPGKPYPVAVVLGADPATTLGAVTPVPDSLSEYQFAGLLRGSRTELAKCLTPGVDTLQVPARAEIVLEGFIYPQEGAPAPAPAGAPPRPAGNASAKYEHALEGPYGDHTGYYNEQEWFPVFTVERITMRRDAIYHSTYTGKPPDEPAVLGVALNEVFVPLLQKQFTEITDFYLPPEGCSYRMAIVQMKKSYAGHAKRVMFGVWSFLRQFMYTKFIVVVDEDVNIRDWKEVIWAITTRVDPVRDTVMVDSTPIDYLDFASPVAGLGSKMGLDATNKWPGETNREWGRPIEMDAAVKARVDRLWQEIGL.

Asn-177 contacts Mn(2+). Prenylated FMN-binding positions include 180 to 182, 194 to 196, and 199 to 200; these read IYR, RWL, and RG. Residue Glu-243 participates in Mn(2+) binding. Asp-318 serves as the catalytic Proton donor.

It belongs to the UbiD family. In terms of assembly, homohexamer. Requires prenylated FMN as cofactor. Mn(2+) serves as cofactor.

It localises to the cell membrane. The catalysed reaction is a 4-hydroxy-3-(all-trans-polyprenyl)benzoate + H(+) = a 2-(all-trans-polyprenyl)phenol + CO2. It functions in the pathway cofactor biosynthesis; ubiquinone biosynthesis. Catalyzes the decarboxylation of 3-octaprenyl-4-hydroxy benzoate to 2-octaprenylphenol, an intermediate step in ubiquinone biosynthesis. The sequence is that of 3-octaprenyl-4-hydroxybenzoate carboxy-lyase from Burkholderia lata (strain ATCC 17760 / DSM 23089 / LMG 22485 / NCIMB 9086 / R18194 / 383).